Here is a 323-residue protein sequence, read N- to C-terminus: Breast cancer metastasis-suppressor 1-like protein (323 aa).

A compositionally biased stretch (basic and acidic residues) spans 1-15 (MPVHSREKKENNHDE). Residues 1–56 (MPVHSREKKENNHDEMEVDYGENEGSTSEEEETESSSVSEEGDSSEMDDEDCERRR) form a disordered region. Residues 16 to 51 (MEVDYGENEGSTSEEEETESSSVSEEGDSSEMDDED) show a composition bias toward acidic residues. Coiled-coil stretches lie at residues 50–82 (EDCE…KERL) and 147–178 (EKLL…ITSE).

The protein belongs to the BRMS1 family.

It localises to the nucleus. In terms of biological role, involved in the histone deacetylase (HDAC1)-dependent transcriptional repression activity. The polypeptide is Breast cancer metastasis-suppressor 1-like protein (BRMS1L) (Gallus gallus (Chicken)).